The sequence spans 407 residues: Naringenin 8-dimethylallyltransferase 2, chloroplastic (407 aa).

The N-terminal 23 residues, 1-23 (MGFVLPASFPGASSITTGGSCLR), are a transit peptide targeting the chloroplast. 8 helical membrane-spanning segments follow: residues 117–137 (FCRP…SLVA), 145–165 (SLAF…IHIF), 206–226 (ILGL…TVFI), 248–268 (VLTA…GFFL), 285–305 (LIFC…FKDI), 328–348 (VFWI…LVGA), 352–372 (ILWS…VLWY), and 383–403 (VVLQ…YCLI).

The protein belongs to the UbiA prenyltransferase family. The cofactor is Mg(2+). Mn(2+) is required as a cofactor.

Its subcellular location is the plastid. The protein localises to the chloroplast membrane. The enzyme catalyses (2S)-naringenin + dimethylallyl diphosphate = sophoraflavanone B + diphosphate. Functionally, involved in the biosynthesis of sophoraflavanone G (SFG). Can use flavanones (naringenin, liquiritigenin and hesperetin) as substrates, but not flavonols or isoflavones. Shows a strict specificity for dimethylallyl diphosphate. In Sophora flavescens (Shrubby sophora), this protein is Naringenin 8-dimethylallyltransferase 2, chloroplastic (N8DT-2).